We begin with the raw amino-acid sequence, 353 residues long: Replication-associated protein (353 aa).

The CRESS-DNA virus Rep endonuclease domain occupies 8–116 (RVQSKNYFLT…DGVTIEWGQF (109 aa)). Residues 15 to 18 (FLTY) carry the RCR-1 motif. Positions 49, 57, and 59 each coordinate a divalent metal cation. The short motif at 57–59 (HLH) is the RCR-2 element. Residue Tyr103 is the For DNA cleavage activity of the active site. Positions 103–106 (YIDK) match the RCR-3 motif. Asp107 is an a divalent metal cation binding site. The tract at residues 143–153 (IESALTILKEE) is binding to RBR1. Residues 156-176 (KDYVLQNHNIRSNLERIFFKV) are oligomerization. 222–229 (GDSRTGKT) contacts ATP.

It belongs to the geminiviridae Rep protein family. In terms of assembly, homooligomer. Interacts with the replication enhancer protein (REn). Interacts with host retinoblastoma-related protein 1 (RBR1), and may thereby induce the transcription of host replicative enzymes even if the cell is not dividing anymore. Interacts with host PCNA. Interacts with host SCE1 protein. Binds to host RAD54 protein to ensure geminiviral replication. Mg(2+) is required as a cofactor. It depends on Mn(2+) as a cofactor.

It localises to the host nucleus. Functionally, essential for the replication of viral ssDNA. The closed circular ssDNA genome is first converted to a superhelical dsDNA. Rep binds a specific region at the genome origin of replication. It introduces an endonucleolytic nick within the conserved sequence 5'-TAATATTAC-3' in the intergenic region of the genome present in all geminiviruses, thereby initiating the rolling circle replication (RCR). Following cleavage, binds covalently to the 5'-phosphate of DNA as a tyrosyl ester. The cleavage gives rise to a free 3'-OH that serves as a primer for the cellular DNA polymerase. The polymerase synthesizes the (+) strand DNA by rolling circle mechanism. After one round of replication, a Rep-catalyzed nucleotidyl transfer reaction releases a circular single-stranded virus genome, thereby terminating the replication. Displays origin-specific DNA cleavage, nucleotidyl transferase, ATPase and helicase activities. In Macroptilium lathyroides (Lima bean), this protein is Replication-associated protein.